A 447-amino-acid chain; its full sequence is MSMTPREIVHELNRHIIGQDDAKRAVAIALRNRWRRMQLPAELRAEVTPKNILMIGPTGVGKTEIARRLAKLANAPFLKVEATKFTEVGYVGRDVESIIRDLADAALKMLREQEIIRVRHRAEDAAEDRILDALLPQARVTSFSEEAAQTSSDSNTRQLFRKRLREGQLDDKEIEIEVADAVGVEIAAPPGMEEMTNQLQSLFANMGKGKRKARKLKVKEALKMVRDEEASRLVNEEELKAKALEAVEQHGIVFIDEIDKVAKRGNVGGADVSREGVQRDLLPLIEGCTVNTKLGMVKTDHILFIASGAFHLSKPSDLVPELQGRLPIRVELKALTPEDFERILQEPHASLTEQYQALLKTEGLNIAFQADGIKRLAEIAYQVNEKTENIGARRLHTLLERLLEEVSFSAGDLASTHDEAPIQIDAAYVNSHLGELAQNEDLSRYIL.

Residues I17, 59–64 (GVGKTE), D256, E321, and R393 contribute to the ATP site.

The protein belongs to the ClpX chaperone family. HslU subfamily. A double ring-shaped homohexamer of HslV is capped on each side by a ring-shaped HslU homohexamer. The assembly of the HslU/HslV complex is dependent on binding of ATP.

It is found in the cytoplasm. Its function is as follows. ATPase subunit of a proteasome-like degradation complex; this subunit has chaperone activity. The binding of ATP and its subsequent hydrolysis by HslU are essential for unfolding of protein substrates subsequently hydrolyzed by HslV. HslU recognizes the N-terminal part of its protein substrates and unfolds these before they are guided to HslV for hydrolysis. In Pseudomonas putida (strain GB-1), this protein is ATP-dependent protease ATPase subunit HslU.